The sequence spans 357 residues: Isopentenyl-diphosphate delta-isomerase (357 aa).

Residue 6 to 7 (RK) participates in substrate binding. FMN-binding positions include serine 62, 63-65 (AMT), serine 93, and asparagine 122. 93-95 (SQR) serves as a coordination point for substrate. Glutamine 156 is a substrate binding site. Glutamate 157 provides a ligand contact to Mg(2+). FMN is bound by residues lysine 186, threonine 216, 267–269 (GVR), and 288–289 (AL).

Belongs to the IPP isomerase type 2 family. As to quaternary structure, homooctamer. Dimer of tetramers. Requires FMN as cofactor. NADPH serves as cofactor. The cofactor is Mg(2+).

It is found in the cytoplasm. The catalysed reaction is isopentenyl diphosphate = dimethylallyl diphosphate. Functionally, involved in the biosynthesis of isoprenoids. Catalyzes the 1,3-allylic rearrangement of the homoallylic substrate isopentenyl (IPP) to its allylic isomer, dimethylallyl diphosphate (DMAPP). This is Isopentenyl-diphosphate delta-isomerase from Methanothrix thermoacetophila (strain DSM 6194 / JCM 14653 / NBRC 101360 / PT) (Methanosaeta thermophila).